Consider the following 263-residue polypeptide: Undecaprenyl-diphosphatase (263 aa).

A run of 7 helical transmembrane segments spans residues 38 to 58 (RSDF…CLAL), 75 to 95 (RDYV…GLIV), 108 to 128 (PVAW…HFAG), 135 to 155 (VVTW…GVFP), 181 to 201 (FVFM…LLEM), 217 to 237 (VAFI…LGYI), and 242 to 262 (FTVF…WLPA).

It belongs to the UppP family.

The protein localises to the cell inner membrane. The catalysed reaction is di-trans,octa-cis-undecaprenyl diphosphate + H2O = di-trans,octa-cis-undecaprenyl phosphate + phosphate + H(+). In terms of biological role, catalyzes the dephosphorylation of undecaprenyl diphosphate (UPP). Confers resistance to bacitracin. This is Undecaprenyl-diphosphatase from Xanthomonas campestris pv. campestris (strain 8004).